Reading from the N-terminus, the 284-residue chain is Nucleotide-binding protein CPS_4546 (284 aa).

8–15 lines the ATP pocket; that stretch reads GRSGSGKS. 56–59 serves as a coordination point for GTP; the sequence is DVRN.

Belongs to the RapZ-like family.

Displays ATPase and GTPase activities. This Colwellia psychrerythraea (strain 34H / ATCC BAA-681) (Vibrio psychroerythus) protein is Nucleotide-binding protein CPS_4546.